A 353-amino-acid polypeptide reads, in one-letter code: Photosystem II protein D1 (353 aa).

The residue at position 2 (Thr-2) is an N-acetylthreonine. A Phosphothreonine modification is found at Thr-2. Transmembrane regions (helical) follow at residues 29–46, 118–133, and 142–156; these read YIGW…TATS, HFLL…EWEL, and WIAV…AATA. A chlorophyll a-binding site is contributed by His-118. Position 126 (Tyr-126) interacts with pheophytin a. [CaMn4O5] cluster-binding residues include Asp-170 and Glu-189. The helical transmembrane segment at 197 to 218 threads the bilayer; the sequence is FHMLGVAGVFGGSLFSAMHGSL. A chlorophyll a-binding site is contributed by His-198. A quinone contacts are provided by residues His-215 and 264 to 265; that span reads SF. His-215 contacts Fe cation. Residue His-272 coordinates Fe cation. Residues 274–288 form a helical membrane-spanning segment; the sequence is FLAAWPVVGIWFTAL. [CaMn4O5] cluster contacts are provided by His-332, Glu-333, Asp-342, and Ala-344. A propeptide spanning residues 345-353 is cleaved from the precursor; sequence AVESPSING.

The protein belongs to the reaction center PufL/M/PsbA/D family. In terms of assembly, PSII is composed of 1 copy each of membrane proteins PsbA, PsbB, PsbC, PsbD, PsbE, PsbF, PsbH, PsbI, PsbJ, PsbK, PsbL, PsbM, PsbT, PsbX, PsbY, PsbZ, Psb30/Ycf12, at least 3 peripheral proteins of the oxygen-evolving complex and a large number of cofactors. It forms dimeric complexes. It depends on The D1/D2 heterodimer binds P680, chlorophylls that are the primary electron donor of PSII, and subsequent electron acceptors. It shares a non-heme iron and each subunit binds pheophytin, quinone, additional chlorophylls, carotenoids and lipids. D1 provides most of the ligands for the Mn4-Ca-O5 cluster of the oxygen-evolving complex (OEC). There is also a Cl(-1) ion associated with D1 and D2, which is required for oxygen evolution. The PSII complex binds additional chlorophylls, carotenoids and specific lipids. as a cofactor. Tyr-161 forms a radical intermediate that is referred to as redox-active TyrZ, YZ or Y-Z. In terms of processing, C-terminally processed by CTPA; processing is essential to allow assembly of the oxygen-evolving complex and thus photosynthetic growth.

The protein localises to the plastid. It localises to the chloroplast thylakoid membrane. It catalyses the reaction 2 a plastoquinone + 4 hnu + 2 H2O = 2 a plastoquinol + O2. Its function is as follows. Photosystem II (PSII) is a light-driven water:plastoquinone oxidoreductase that uses light energy to abstract electrons from H(2)O, generating O(2) and a proton gradient subsequently used for ATP formation. It consists of a core antenna complex that captures photons, and an electron transfer chain that converts photonic excitation into a charge separation. The D1/D2 (PsbA/PsbD) reaction center heterodimer binds P680, the primary electron donor of PSII as well as several subsequent electron acceptors. This chain is Photosystem II protein D1, found in Sinapis alba (White mustard).